Consider the following 126-residue polypeptide: Fluoride-specific ion channel FluC (126 aa).

The next 4 helical transmembrane spans lie at 4-24 (PLLS…FLGL), 33-53 (IPLG…FAMA), 67-87 (FVIT…IEIV), and 97-117 (MAML…CLGL). Na(+) contacts are provided by Gly-74 and Thr-77.

Belongs to the fluoride channel Fluc/FEX (TC 1.A.43) family.

It is found in the cell inner membrane. The enzyme catalyses fluoride(in) = fluoride(out). With respect to regulation, na(+) is not transported, but it plays an essential structural role and its presence is essential for fluoride channel function. In terms of biological role, fluoride-specific ion channel. Important for reducing fluoride concentration in the cell, thus reducing its toxicity. The chain is Fluoride-specific ion channel FluC from Acinetobacter baumannii (strain SDF).